A 356-amino-acid polypeptide reads, in one-letter code: Butyrate kinase (356 aa).

It belongs to the acetokinase family.

Its subcellular location is the cytoplasm. It catalyses the reaction butanoate + ATP = butanoyl phosphate + ADP. It functions in the pathway lipid metabolism; butanoate metabolism. Catalyzes the conversion of butyryl-CoA through butyryl phosphate to butyrate. The protein is Butyrate kinase (buk) of Clostridium perfringens (strain 13 / Type A).